The chain runs to 229 residues: Large ribosomal subunit protein uL1 (229 aa).

The protein belongs to the universal ribosomal protein uL1 family. As to quaternary structure, part of the 50S ribosomal subunit.

In terms of biological role, binds directly to 23S rRNA. The L1 stalk is quite mobile in the ribosome, and is involved in E site tRNA release. Functionally, protein L1 is also a translational repressor protein, it controls the translation of the L11 operon by binding to its mRNA. This chain is Large ribosomal subunit protein uL1, found in Clostridium beijerinckii (strain ATCC 51743 / NCIMB 8052) (Clostridium acetobutylicum).